Consider the following 407-residue polypeptide: Phosphopentomutase (407 aa).

Positions 10, 306, 311, 347, 348, and 359 each coordinate Mn(2+).

Belongs to the phosphopentomutase family. Mn(2+) serves as cofactor.

Its subcellular location is the cytoplasm. It carries out the reaction 2-deoxy-alpha-D-ribose 1-phosphate = 2-deoxy-D-ribose 5-phosphate. The enzyme catalyses alpha-D-ribose 1-phosphate = D-ribose 5-phosphate. It functions in the pathway carbohydrate degradation; 2-deoxy-D-ribose 1-phosphate degradation; D-glyceraldehyde 3-phosphate and acetaldehyde from 2-deoxy-alpha-D-ribose 1-phosphate: step 1/2. In terms of biological role, isomerase that catalyzes the conversion of deoxy-ribose 1-phosphate (dRib-1-P) and ribose 1-phosphate (Rib-1-P) to deoxy-ribose 5-phosphate (dRib-5-P) and ribose 5-phosphate (Rib-5-P), respectively. The protein is Phosphopentomutase of Serratia proteamaculans (strain 568).